We begin with the raw amino-acid sequence, 426 residues long: Glutamate-1-semialdehyde 2,1-aminomutase (426 aa).

Lys265 is subject to N6-(pyridoxal phosphate)lysine.

Belongs to the class-III pyridoxal-phosphate-dependent aminotransferase family. HemL subfamily. As to quaternary structure, homodimer. Pyridoxal 5'-phosphate serves as cofactor.

The protein localises to the cytoplasm. It catalyses the reaction (S)-4-amino-5-oxopentanoate = 5-aminolevulinate. It participates in porphyrin-containing compound metabolism; protoporphyrin-IX biosynthesis; 5-aminolevulinate from L-glutamyl-tRNA(Glu): step 2/2. This is Glutamate-1-semialdehyde 2,1-aminomutase from Neisseria gonorrhoeae (strain ATCC 700825 / FA 1090).